We begin with the raw amino-acid sequence, 215 residues long: UPF0319 protein VVA1446 (215 aa).

The signal sequence occupies residues 1 to 21 (MNIIKPLTCILAMSISGLATA).

This sequence belongs to the UPF0319 family.

The chain is UPF0319 protein VVA1446 from Vibrio vulnificus (strain YJ016).